The sequence spans 306 residues: Tyrosine recombinase XerD (306 aa).

Residues 1–83 (MGFIAQFLEM…TIKSYYEFLI (83 aa)) form the Core-binding (CB) domain. The region spanning 104 to 299 (KLPEILSIAQ…QTNHLKKALL (196 aa)) is the Tyr recombinase domain. Catalysis depends on residues Arg145, Lys176, His251, Arg254, and His277. Residue Tyr286 is the O-(3'-phospho-DNA)-tyrosine intermediate of the active site.

It belongs to the 'phage' integrase family. XerD subfamily. Forms a cyclic heterotetrameric complex composed of two molecules of XerC and two molecules of XerD.

It localises to the cytoplasm. Site-specific tyrosine recombinase, which acts by catalyzing the cutting and rejoining of the recombining DNA molecules. The XerC-XerD complex is essential to convert dimers of the bacterial chromosome into monomers to permit their segregation at cell division. It also contributes to the segregational stability of plasmids. In Rickettsia conorii (strain ATCC VR-613 / Malish 7), this protein is Tyrosine recombinase XerD.